The sequence spans 1150 residues: Pyruvate carboxylase (1150 aa).

The 453-residue stretch at 3-455 folds into the Biotin carboxylation domain; that stretch reads QIKKLLVANR…TTKFIEETPE (453 aa). Residues lysine 119, lysine 161, histidine 211, and glutamate 278 each contribute to the ATP site. The region spanning 123-319 is the ATP-grasp domain; the sequence is RTTAIKADLP…IVKTQILVAA (197 aa). Arginine 294 is an active-site residue. Residues 533 to 802 form the Pyruvate carboxyltransferase domain; sequence VLLTDTTFRD…HLRTDIEGME (270 aa). 541–545 provides a ligand contact to substrate; it reads RDAHQ. Aspartate 542, lysine 712, histidine 741, and histidine 743 together coordinate Mn(2+). Residue lysine 712 is modified to N6-carboxylysine. The Biotinyl-binding domain occupies 1071–1146; the sequence is KADKSNPSHI…ATGDLLIEIE (76 aa). The residue at position 1112 (lysine 1112) is an N6-biotinyllysine.

Homotetramer. Requires biotin as cofactor.

It catalyses the reaction hydrogencarbonate + pyruvate + ATP = oxaloacetate + ADP + phosphate + H(+). In terms of biological role, catalyzes a 2-step reaction, involving the ATP-dependent carboxylation of the covalently attached biotin in the first step and the transfer of the carboxyl group to pyruvate in the second. The chain is Pyruvate carboxylase (pycA) from Staphylococcus aureus (strain Mu50 / ATCC 700699).